The chain runs to 371 residues: tRNA-specific 2-thiouridylase MnmA (371 aa).

Residues 16-23 (GMSGGVDS) and Met-42 contribute to the ATP site. The interaction with target base in tRNA stretch occupies residues 102–104 (NPD). The active-site Nucleophile is the Cys-107. A disulfide bridge links Cys-107 with Cys-204. Gly-132 is a binding site for ATP. Residues 154-156 (KDQ) form an interaction with tRNA region. Catalysis depends on Cys-204, which acts as the Cysteine persulfide intermediate. Residues 316–317 (RY) form an interaction with tRNA region.

It belongs to the MnmA/TRMU family.

It is found in the cytoplasm. It carries out the reaction S-sulfanyl-L-cysteinyl-[protein] + uridine(34) in tRNA + AH2 + ATP = 2-thiouridine(34) in tRNA + L-cysteinyl-[protein] + A + AMP + diphosphate + H(+). In terms of biological role, catalyzes the 2-thiolation of uridine at the wobble position (U34) of tRNA, leading to the formation of s(2)U34. The sequence is that of tRNA-specific 2-thiouridylase MnmA from Shewanella pealeana (strain ATCC 700345 / ANG-SQ1).